The chain runs to 469 residues: Neuraminidase (469 aa).

At 1-9 (MNPNQKIIT) the chain is on the intravirion side. The helical transmembrane segment at 10–30 (IGSVSLTIATVCFLMQIAILV) threads the bilayer. The tract at residues 11-33 (GSVSLTIATVCFLMQIAILVTTV) is involved in apical transport and lipid raft association. The Virion surface portion of the chain corresponds to 31–469 (TTVTLHFKQY…DGANINFMPI (439 aa)). A hypervariable stalk region region spans residues 36–88 (HFKQYECDSPASNQVMPCEPIIIERNITEIVYLNNTTIDKEKCPKVVEYRNWS). Asn61, Asn69, Asn70, and Asn86 each carry an N-linked (GlcNAc...) asparagine; by host glycan. A head of neuraminidase region spans residues 91 to 469 (QCQITGFAPF…DGANINFMPI (379 aa)). Intrachain disulfides connect Cys92–Cys417, Cys124–Cys129, Cys183–Cys230, Cys232–Cys237, Cys278–Cys291, Cys280–Cys289, Cys318–Cys337, and Cys421–Cys447. Arg118 serves as a coordination point for substrate. Residue Asn146 is glycosylated (N-linked (GlcNAc...) asparagine; by host). The active-site Proton donor/acceptor is the Asp151. Arg152 lines the substrate pocket. Asn200 and Asn234 each carry an N-linked (GlcNAc...) asparagine; by host glycan. 276–277 (EE) is a binding site for substrate. Arg292 serves as a coordination point for substrate. Residues Asp293, Gly297, and Asp324 each contribute to the Ca(2+) site. A disordered region spans residues 324-350 (DTPRNDDRSSNSNCRNPNNERGNQGVK). Low complexity predominate over residues 333–342 (SNSNCRNPNN). Residue Arg371 participates in substrate binding. The N-linked (GlcNAc...) asparagine; by host glycan is linked to Asn402. Tyr406 acts as the Nucleophile in catalysis.

This sequence belongs to the glycosyl hydrolase 34 family. In terms of assembly, homotetramer. Requires Ca(2+) as cofactor. In terms of processing, N-glycosylated.

It localises to the virion membrane. Its subcellular location is the host apical cell membrane. The enzyme catalyses Hydrolysis of alpha-(2-&gt;3)-, alpha-(2-&gt;6)-, alpha-(2-&gt;8)- glycosidic linkages of terminal sialic acid residues in oligosaccharides, glycoproteins, glycolipids, colominic acid and synthetic substrates.. Inhibited by the neuraminidase inhibitors zanamivir (Relenza) and oseltamivir (Tamiflu). These drugs interfere with the release of progeny virus from infected cells and are effective against all influenza strains. Resistance to neuraminidase inhibitors is quite rare. Its function is as follows. Catalyzes the removal of terminal sialic acid residues from viral and cellular glycoconjugates. Cleaves off the terminal sialic acids on the glycosylated HA during virus budding to facilitate virus release. Additionally helps virus spread through the circulation by further removing sialic acids from the cell surface. These cleavages prevent self-aggregation and ensure the efficient spread of the progeny virus from cell to cell. Otherwise, infection would be limited to one round of replication. Described as a receptor-destroying enzyme because it cleaves a terminal sialic acid from the cellular receptors. May facilitate viral invasion of the upper airways by cleaving the sialic acid moieties on the mucin of the airway epithelial cells. Likely to plays a role in the budding process through its association with lipid rafts during intracellular transport. May additionally display a raft-association independent effect on budding. Plays a role in the determination of host range restriction on replication and virulence. Sialidase activity in late endosome/lysosome traffic seems to enhance virus replication. The protein is Neuraminidase of Aves (whales).